We begin with the raw amino-acid sequence, 98 residues long: MANIQFRPLHDRVVVRRVESENKTAGGIIIPDTAKEKPQEGEVIAVGNGALDDNGKRVPLEVKTGDRILFGKWSGTEVKINGEDLLIMKESDIMGIMG.

It belongs to the GroES chaperonin family. Heptamer of 7 subunits arranged in a ring. Interacts with the chaperonin GroEL.

The protein resides in the cytoplasm. Together with the chaperonin GroEL, plays an essential role in assisting protein folding. The GroEL-GroES system forms a nano-cage that allows encapsulation of the non-native substrate proteins and provides a physical environment optimized to promote and accelerate protein folding. GroES binds to the apical surface of the GroEL ring, thereby capping the opening of the GroEL channel. The sequence is that of Co-chaperonin GroES from Bartonella tribocorum (strain CIP 105476 / IBS 506).